The primary structure comprises 288 residues: MNNIIDGKALANEILADLKLEIQELTSQTNASPKLAIVLVGDNPASIIYVRHKIKNAHKVGIYTLLINLSATIHTNDLISKINELNLDNEISGIIVQLPLPSSIDKNKILSAISPSKDIDGFHPLNVGYLHSGISQGFIPCTALGCLAAIKKYEPNLTGKNVVIIGRSNIVGKPLSALLLKENCSVTICHSKTHNLRSITSKADIVVAAIGSPLKLTAEYFNPESIVIDVGINRISSNKIIGDVDFENVQSKVQYITPVPGGIGPMTIAFLLKNTVKAFKDSLYTLDT.

NADP(+) contacts are provided by residues 166-168, serine 191, and isoleucine 232; that span reads GRS.

Belongs to the tetrahydrofolate dehydrogenase/cyclohydrolase family. Homodimer.

The enzyme catalyses (6R)-5,10-methylene-5,6,7,8-tetrahydrofolate + NADP(+) = (6R)-5,10-methenyltetrahydrofolate + NADPH. It catalyses the reaction (6R)-5,10-methenyltetrahydrofolate + H2O = (6R)-10-formyltetrahydrofolate + H(+). The protein operates within one-carbon metabolism; tetrahydrofolate interconversion. Functionally, catalyzes the oxidation of 5,10-methylenetetrahydrofolate to 5,10-methenyltetrahydrofolate and then the hydrolysis of 5,10-methenyltetrahydrofolate to 10-formyltetrahydrofolate. The chain is Bifunctional protein FolD from Rickettsia rickettsii (strain Iowa).